We begin with the raw amino-acid sequence, 285 residues long: Bifunctional protein FolD (285 aa).

NADP(+) contacts are provided by residues 166–168 (GAS) and I232.

It belongs to the tetrahydrofolate dehydrogenase/cyclohydrolase family. As to quaternary structure, homodimer.

The enzyme catalyses (6R)-5,10-methylene-5,6,7,8-tetrahydrofolate + NADP(+) = (6R)-5,10-methenyltetrahydrofolate + NADPH. It catalyses the reaction (6R)-5,10-methenyltetrahydrofolate + H2O = (6R)-10-formyltetrahydrofolate + H(+). It participates in one-carbon metabolism; tetrahydrofolate interconversion. Catalyzes the oxidation of 5,10-methylenetetrahydrofolate to 5,10-methenyltetrahydrofolate and then the hydrolysis of 5,10-methenyltetrahydrofolate to 10-formyltetrahydrofolate. The protein is Bifunctional protein FolD of Buchnera aphidicola subsp. Schizaphis graminum (strain Sg).